The primary structure comprises 175 residues: Sec-independent protein translocase protein TatB (175 aa).

A helical membrane pass occupies residues 1–21; it reads MLDLGLSKMALIGVVALVVLG. Residues 99–115 are compositionally biased toward low complexity; sequence GDPAAADASGGLGATSD. Positions 99–118 are disordered; it reads GDPAAADASGGLGATSDEPS.

It belongs to the TatB family. As to quaternary structure, the Tat system comprises two distinct complexes: a TatABC complex, containing multiple copies of TatA, TatB and TatC subunits, and a separate TatA complex, containing only TatA subunits. Substrates initially bind to the TatABC complex, which probably triggers association of the separate TatA complex to form the active translocon.

The protein localises to the cell inner membrane. In terms of biological role, part of the twin-arginine translocation (Tat) system that transports large folded proteins containing a characteristic twin-arginine motif in their signal peptide across membranes. Together with TatC, TatB is part of a receptor directly interacting with Tat signal peptides. TatB may form an oligomeric binding site that transiently accommodates folded Tat precursor proteins before their translocation. The chain is Sec-independent protein translocase protein TatB from Burkholderia thailandensis (strain ATCC 700388 / DSM 13276 / CCUG 48851 / CIP 106301 / E264).